Reading from the N-terminus, the 417-residue chain is DNA primase DnaG (417 aa).

One can recognise a Toprim domain in the interval 171–257; it reads DAIIIVEGRA…SVEDMARKEI (87 aa). Mg(2+)-binding residues include E177, D219, and D221. A disordered region spans residues 278 to 325; sequence VPGEKRTQDLRPQKPGASEQNSIKKENVENENESTPTSFEPISEPAPP. Positions 279–289 are enriched in basic and acidic residues; it reads PGEKRTQDLRP.

The protein belongs to the archaeal DnaG primase family. As to quaternary structure, forms a ternary complex with MCM helicase and DNA. It depends on Mg(2+) as a cofactor.

It carries out the reaction ssDNA + n NTP = ssDNA/pppN(pN)n-1 hybrid + (n-1) diphosphate.. Functionally, RNA polymerase that catalyzes the synthesis of short RNA molecules used as primers for DNA polymerase during DNA replication. This chain is DNA primase DnaG, found in Methanosphaerula palustris (strain ATCC BAA-1556 / DSM 19958 / E1-9c).